A 487-amino-acid polypeptide reads, in one-letter code: Phosphatidylserine synthase 2 (487 aa).

Residues 1–10 (MRRGERRDAG) show a composition bias toward basic and acidic residues. Residues 1 to 50 (MRRGERRDAGGPRPESPVPAGRASLEEPPDGPSAGQATGPGEGRRSTESE) form a disordered region. Residues 1–62 (MRRGERRDAG…DDGTNTFFWR (62 aa)) lie on the Cytoplasmic side of the membrane. 2 positions are modified to phosphoserine: Ser-16 and Ser-24. Residues 63–83 (AHTLTVLFILTCTLGYVTLLE) form a helical membrane-spanning segment. Residues 84–96 (ETPQDTAYNTKRG) are Lumenal-facing. Residues 97–117 (IVASILVFLCFGVTQAKDGPF) traverse the membrane as a helical segment. Residues 118 to 126 (SRPHPAYWR) lie on the Cytoplasmic side of the membrane. A helical membrane pass occupies residues 127 to 147 (FWLCVSVVYELFLIFILFQTV). Residues 148-313 (QDGRQFLKYV…EWKPASSLRR (166 aa)) are Lumenal-facing. An N-linked (GlcNAc...) asparagine glycan is attached at Asn-181. Residues 314-334 (WLAVCGIILVFLLAELNTFYL) traverse the membrane as a helical segment. Lys-335 is a topological domain (cytoplasmic). A helical transmembrane segment spans residues 336 to 356 (FVLWMPPEHYLVLLRLVFFVN). Residues 357 to 376 (VGGVAMREIYDFMDDPKPHK) lie on the Lumenal side of the membrane. The chain crosses the membrane as a helical span at residues 377–397 (KLGPQAWLVAAITATELLIVV). The Cytoplasmic segment spans residues 398-403 (KYDPHT). Residues 404–424 (LTLSLPFYISQCWTLGSVLAL) form a helical membrane-spanning segment. Residues 425-487 (TWTVWRFFLR…AEGEGAPTPN (63 aa)) lie on the Lumenal side of the membrane. Residues 451 to 487 (KDDQGSTVGNGDQHPLGLDEDLLGPGVAEGEGAPTPN) are disordered. Position 485 is a phosphothreonine (Thr-485).

Belongs to the phosphatidyl serine synthase family.

It is found in the endoplasmic reticulum membrane. It catalyses the reaction a 1,2-diacyl-sn-glycero-3-phosphoethanolamine + L-serine = a 1,2-diacyl-sn-glycero-3-phospho-L-serine + ethanolamine. The catalysed reaction is 1-hexadecanoyl-2-(9Z-octadecenoyl)-sn-glycero-3-phosphoethanolamine + L-serine = 1-hexadecanoyl-2-(9Z-octadecenoyl)-sn-glycero-3-phospho-L-serine + ethanolamine. The enzyme catalyses 1-hexadecanoyl-2-(4Z,7Z,10Z,13Z,16Z,19Z-docosahexaenoyl)-sn-glycero-3-phosphoethanolamine + L-serine = 1-hexadecanoyl-2-(4Z,7Z,10Z,13Z,16Z,19Z-docosahexaenoyl)-sn-glycero-3-phosphoserine + ethanolamine. It carries out the reaction 1-octadecanoyl-2-(5Z,8Z,11Z,14Z)-eicosatetraenoyl-sn-glycero-3-phosphoethanolamine + L-serine = 1-octadecanoyl-2-(5Z,8Z,11Z,14Z)-eicosatetraenoyl-sn-glycero-3-phosphoserine + ethanolamine. It catalyses the reaction 1-octadecanoyl-2-(4Z,7Z,10Z,13Z,16Z,19Z-docosahexaenoyl)-sn-glycero-3-phosphoethanolamine + L-serine = 1-octadecanoyl-2-(4Z,7Z,10Z,13Z,16Z,19Z-docosahexaenoyl)-sn-glycero-3-phosphoserine + ethanolamine. The catalysed reaction is 1-(1Z-octadecenyl)-2-(4Z,7Z,10Z,13Z,16Z,19Z-docosahexaenoyl)-sn-glycero-3-phosphoethanolamine + L-serine = 1-(1Z-octadecenyl)-2-(4Z,7Z,10Z,13Z,16Z,19Z-docosahexaenoyl)-sn-glycero-3-phospho-L-serine + ethanolamine. The enzyme catalyses 1-octadecanoyl-2-(9Z-octadecenoyl)-sn-glycero-3-phosphoethanolamine + L-serine = 1-octadecanoyl-2-(9Z-octadecenoyl)-sn-glycero-3-phospho-L-serine + ethanolamine. It carries out the reaction 1-(1Z-octadecenyl)-2-(9Z-octadecenoyl)-sn-glycero-3-phosphoethanolamine + L-serine = 1-(1Z-octadecenyl)-2-(9Z-octadecenoyl)-sn-glycero-3-phospho-L-serine + ethanolamine. It catalyses the reaction 1-(1Z-octadecenyl)-2-(5Z,8Z,11Z,14Z- eicosatetraenoyl)-sn-glycero-3-phosphoethanolamine + L-serine = 1-(1Z-octadecenyl)-2-(5Z,8Z,11Z,14Z-eicosatetraenoyl)-sn-glycero-3-phospho-L-serine + ethanolamine. It functions in the pathway phospholipid metabolism; phosphatidylserine biosynthesis. Requires calcium ions. Inhibited by exogenous phosphatidylserine. Functionally, catalyzes a base-exchange reaction in which the polar head group of phosphatidylethanolamine (PE) or phosphatidylcholine (PC) is replaced by L-serine. Catalyzes the conversion of phosphatatidylethanolamine and does not act on phosphatidylcholine. Can utilize both phosphatidylethanolamine (PE) plasmalogen and diacyl PE as substrate and the latter is six times better utilized, indicating the importance of an ester linkage at the sn-1 position. Although it shows no sn-1 fatty acyl preference, exhibits significant preference towards docosahexaenoic acid (22:6n-3) compared with 18:1 or 20:4 at the sn-2 position. The sequence is that of Phosphatidylserine synthase 2 (PTDSS2) from Homo sapiens (Human).